A 260-amino-acid polypeptide reads, in one-letter code: Oxidoreductase macE (260 aa).

Belongs to the oxidoreductase OpS7 family.

It participates in secondary metabolite biosynthesis; terpenoid biosynthesis. Oxidoreductase; part of the gene cluster that mediates the biosynthesis of macrophorins, isoprenoid epoxycyclohexenones containing cyclized drimane moieties. The first step of the pathway is the synthesis of 6-methylsalicylic acid (6-MSA) by the polyketide synthase macA. 6-MSA is then converted to m-cresol by the decarboxylase macB. The cytochrome P450 monooxygenase macC then catalyzes the oxidation of m-cresol to toluquinol. Epoxidation of toluquinol is then performed by the short chain dehydrogenase macD, with the help of macE, and a further prenylation by macG leads to 7-deacetoxyyanuthone A. The next step is the hydroxylation of C-22 of 7-deacetoxyyanuthone A by the cytochrome P450 monooxygenase macH to yield 22-deacetylyanuthone A. O-Mevalon transferase macI then attaches mevalon to the hydroxyl group of 22-deacetylyanuthone A to produce yanuthone E. The terpene cyclase macJ catalyzes the cyclization of 22-deacetylyanuthone A to macrophorin A. MacJ is also able to catalyze cyclization of yanuthone E and 7-deacetoxyyanuthone A to their corresponding macrophorins. The macJ products can be further modified by macH and macJ, as well as by the FAD-dependent monooxygenase macF, to produce additional macrophorins, including 4'-oxomacrophorin A, 4'-oxomacrophorin D and 4'-oxomacrophorin E. The polypeptide is Oxidoreductase macE (Penicillium terrestre).